A 196-amino-acid polypeptide reads, in one-letter code: Guanylate kinase (196 aa).

Residues 8 to 189 (GKIIIISGPS…AADKLRHILY (182 aa)) form the Guanylate kinase-like domain. An ATP-binding site is contributed by 15 to 22 (GPSGVGKK).

Belongs to the guanylate kinase family.

The protein resides in the cytoplasm. It catalyses the reaction GMP + ATP = GDP + ADP. Essential for recycling GMP and indirectly, cGMP. The chain is Guanylate kinase from Malacoplasma penetrans (strain HF-2) (Mycoplasma penetrans).